A 516-amino-acid chain; its full sequence is MRTRHLVGLISGVLILSVLLPVGLSIWLAHQQVETSFIEELDTYSSRVAIRANKVATQGKDALQELERWQGAACSEAHLMEMRRVSYSYRYIQEVAYIDNNVPQCSSLEHESPPDTFPEPGKISKDGYRVWLTSHNDLGIIRYMVAMGTAHYVVMIDPASFIDVIPYSSWQIDAAIIGNAHNVVITSSDEIAQGIITRLQKTPGEHIENNGIIYDILPLPEMNISIITWASTKMLQKGWHRQVFIWLPLGLVIGLLAAMFVLRILRRIQSPHHRLQDAIENRDICVHYQPIVSLANGKIVGAEALARWPQTDGSWLSPDSFIPLAQQTGLSEPLTLLIIRSVFEDMGDWLRQHPQQHISINLESPVLTSEKIPQLLRDMINHYQVNPRQIALELTEREFADPKTSAPIISRYREAGHEIYLDDFGTGYSSLSYLQDLDVDILKIDKSFVDALEYKNVTPHIIEMAKTLKLKMVAEGIETSKQEEWLRQHGVHYGQGWLYSKALPKEDFLRWAEQHL.

The next 2 helical transmembrane spans lie at 6-26 (LVGL…GLSI) and 242-262 (QVFI…MFVL). An EAL domain is found at 268–516 (IQSPHHRLQD…DFLRWAEQHL (249 aa)).

The protein resides in the cell inner membrane. The catalysed reaction is 3',3'-c-di-GMP + H2O = 5'-phosphoguanylyl(3'-&gt;5')guanosine + H(+). Functionally, phosphodiesterase (PDE) that catalyzes the hydrolysis of cyclic-di-GMP (c-di-GMP) to 5'-pGpG. This Escherichia coli (strain K12) protein is Probable cyclic di-GMP phosphodiesterase PdeB.